The chain runs to 186 residues: Pyridoxal 5'-phosphate synthase subunit PdxT (186 aa).

47–49 (GES) is an L-glutamine binding site. Cysteine 79 serves as the catalytic Nucleophile. L-glutamine contacts are provided by residues arginine 106 and 134–135 (IR). Residues histidine 170 and glutamate 172 each act as charge relay system in the active site.

It belongs to the glutaminase PdxT/SNO family. In terms of assembly, in the presence of PdxS, forms a dodecamer of heterodimers. Only shows activity in the heterodimer.

It catalyses the reaction aldehydo-D-ribose 5-phosphate + D-glyceraldehyde 3-phosphate + L-glutamine = pyridoxal 5'-phosphate + L-glutamate + phosphate + 3 H2O + H(+). The catalysed reaction is L-glutamine + H2O = L-glutamate + NH4(+). The protein operates within cofactor biosynthesis; pyridoxal 5'-phosphate biosynthesis. Functionally, catalyzes the hydrolysis of glutamine to glutamate and ammonia as part of the biosynthesis of pyridoxal 5'-phosphate. The resulting ammonia molecule is channeled to the active site of PdxS. The chain is Pyridoxal 5'-phosphate synthase subunit PdxT from Methanothrix thermoacetophila (strain DSM 6194 / JCM 14653 / NBRC 101360 / PT) (Methanosaeta thermophila).